The primary structure comprises 77 residues: Translation initiation factor IF-1, chloroplastic (77 aa).

The S1-like domain occupies 1–71 (MKEQKWIHEG…TRGRIIYRLR (71 aa)).

It belongs to the IF-1 family. In terms of assembly, component of the 30S ribosomal translation pre-initiation complex which assembles on the 30S ribosome in the order IF-2 and IF-3, IF-1 and N-formylmethionyl-tRNA(fMet); mRNA recruitment can occur at any time during PIC assembly.

It localises to the plastid. The protein localises to the chloroplast. Functionally, one of the essential components for the initiation of protein synthesis. Stabilizes the binding of IF-2 and IF-3 on the 30S subunit to which N-formylmethionyl-tRNA(fMet) subsequently binds. Helps modulate mRNA selection, yielding the 30S pre-initiation complex (PIC). Upon addition of the 50S ribosomal subunit IF-1, IF-2 and IF-3 are released leaving the mature 70S translation initiation complex. The protein is Translation initiation factor IF-1, chloroplastic of Spinacia oleracea (Spinach).